Reading from the N-terminus, the 183-residue chain is Translation initiation factor IF-3 (183 aa).

Belongs to the IF-3 family. In terms of assembly, monomer.

Its subcellular location is the cytoplasm. Functionally, IF-3 binds to the 30S ribosomal subunit and shifts the equilibrium between 70S ribosomes and their 50S and 30S subunits in favor of the free subunits, thus enhancing the availability of 30S subunits on which protein synthesis initiation begins. The chain is Translation initiation factor IF-3 from Yersinia enterocolitica serotype O:8 / biotype 1B (strain NCTC 13174 / 8081).